The primary structure comprises 213 residues: Large ribosomal subunit protein uL1 (213 aa).

This sequence belongs to the universal ribosomal protein uL1 family. In terms of assembly, part of the 50S ribosomal subunit.

Binds directly to 23S rRNA. Probably involved in E site tRNA release. In terms of biological role, protein L1 is also a translational repressor protein, it controls the translation of its operon by binding to its mRNA. The chain is Large ribosomal subunit protein uL1 from Methanococcus voltae.